Reading from the N-terminus, the 423-residue chain is ATP-dependent RNA helicase RhlB (423 aa).

Residues 9–37 carry the Q motif motif; the sequence is LRFSDLPLHHQVLAALQEKGFDYCTPIQA. The 178-residue stretch at 40 to 217 folds into the Helicase ATP-binding domain; sequence LPMSLAGKDV…FEDMNDPEYV (178 aa). ATP is bound at residue 53–60; the sequence is AQTGTGKT. A DEAD box motif is present at residues 163–166; that stretch reads DEAD. The region spanning 241–388 is the Helicase C-terminal domain; it reads KMALLLTLLE…VSQYDVAALL (148 aa). Positions 397–423 are disordered; that stretch reads KRGNNNSKNSANSNRTFQKKRSLKRNF. Low complexity predominate over residues 400–410; sequence NNNSKNSANSN. Residues 413–423 show a composition bias toward basic residues; the sequence is FQKKRSLKRNF.

This sequence belongs to the DEAD box helicase family. RhlB subfamily. As to quaternary structure, component of the RNA degradosome, which is a multiprotein complex involved in RNA processing and mRNA degradation.

It localises to the cytoplasm. It carries out the reaction ATP + H2O = ADP + phosphate + H(+). Functionally, DEAD-box RNA helicase involved in RNA degradation. Has RNA-dependent ATPase activity and unwinds double-stranded RNA. The protein is ATP-dependent RNA helicase RhlB of Pasteurella multocida (strain Pm70).